We begin with the raw amino-acid sequence, 252 residues long: MQICLMDETGATDGALSVLAARWGLEHDEDNPMALVMTPQHLELRKRDEPKLGGIFVDFVGGAMAHRRKFGGGRGEAVAKAVGIKGDYLPDVVDATAGLGRDAFVLASVGCRVRMLERNPVVAALLDDGLTRGYADADIGGWLQERLQLIHASSLTALTDITPRPQVVYLDPMFPHRQKSALVKKEMRVFQSLVGPDLDADGLLEPARQLATKRVVVKRPDYAPPLADVATPNAIVTKGHRFDIYAGTPLTE.

S-adenosyl-L-methionine-binding positions include 101-102 (RD), 117-118 (ER), 153-154 (SS), and D171.

This sequence belongs to the methyltransferase superfamily. RsmJ family.

It is found in the cytoplasm. It catalyses the reaction guanosine(1516) in 16S rRNA + S-adenosyl-L-methionine = N(2)-methylguanosine(1516) in 16S rRNA + S-adenosyl-L-homocysteine + H(+). Specifically methylates the guanosine in position 1516 of 16S rRNA. The polypeptide is Ribosomal RNA small subunit methyltransferase J (Salmonella typhimurium (strain LT2 / SGSC1412 / ATCC 700720)).